Consider the following 161-residue polypeptide: Ribonuclease H (161 aa).

Residues 3-144 (GLKQISIYTD…CDDLARQAAE (142 aa)) enclose the RNase H type-1 domain. Asp-12, Glu-50, Asp-72, and Asp-136 together coordinate Mg(2+). The segment at 133–161 (ERCDDLARQAAEAKPSQEDSGYINQQAQA) is disordered. Polar residues predominate over residues 150 to 161 (EDSGYINQQAQA).

This sequence belongs to the RNase H family. In terms of assembly, monomer. Mg(2+) serves as cofactor.

Its subcellular location is the cytoplasm. The catalysed reaction is Endonucleolytic cleavage to 5'-phosphomonoester.. Its function is as follows. Endonuclease that specifically degrades the RNA of RNA-DNA hybrids. This is Ribonuclease H from Shewanella halifaxensis (strain HAW-EB4).